The primary structure comprises 402 residues: 4-hydroxy-3-methylbut-2-enyl diphosphate reductase (402 aa).

Cys-66 serves as a coordination point for [4Fe-4S] cluster. A (2E)-4-hydroxy-3-methylbut-2-enyl diphosphate-binding site is contributed by His-96. Position 96 (His-96) interacts with dimethylallyl diphosphate. Position 96 (His-96) interacts with isopentenyl diphosphate. Cys-157 serves as a coordination point for [4Fe-4S] cluster. His-185 contributes to the (2E)-4-hydroxy-3-methylbut-2-enyl diphosphate binding site. His-185 contacts dimethylallyl diphosphate. Position 185 (His-185) interacts with isopentenyl diphosphate. Glu-187 functions as the Proton donor in the catalytic mechanism. Thr-250 lines the (2E)-4-hydroxy-3-methylbut-2-enyl diphosphate pocket. Position 288 (Cys-288) interacts with [4Fe-4S] cluster. 4 residues coordinate (2E)-4-hydroxy-3-methylbut-2-enyl diphosphate: Ser-317, Ser-318, Asn-319, and Ser-379. Ser-317, Ser-318, Asn-319, and Ser-379 together coordinate dimethylallyl diphosphate. Residues Ser-317, Ser-318, Asn-319, and Ser-379 each contribute to the isopentenyl diphosphate site.

Belongs to the IspH family. The cofactor is [4Fe-4S] cluster.

The catalysed reaction is isopentenyl diphosphate + 2 oxidized [2Fe-2S]-[ferredoxin] + H2O = (2E)-4-hydroxy-3-methylbut-2-enyl diphosphate + 2 reduced [2Fe-2S]-[ferredoxin] + 2 H(+). The enzyme catalyses dimethylallyl diphosphate + 2 oxidized [2Fe-2S]-[ferredoxin] + H2O = (2E)-4-hydroxy-3-methylbut-2-enyl diphosphate + 2 reduced [2Fe-2S]-[ferredoxin] + 2 H(+). Its pathway is isoprenoid biosynthesis; dimethylallyl diphosphate biosynthesis; dimethylallyl diphosphate from (2E)-4-hydroxy-3-methylbutenyl diphosphate: step 1/1. It participates in isoprenoid biosynthesis; isopentenyl diphosphate biosynthesis via DXP pathway; isopentenyl diphosphate from 1-deoxy-D-xylulose 5-phosphate: step 6/6. Its function is as follows. Catalyzes the conversion of 1-hydroxy-2-methyl-2-(E)-butenyl 4-diphosphate (HMBPP) into a mixture of isopentenyl diphosphate (IPP) and dimethylallyl diphosphate (DMAPP). Acts in the terminal step of the DOXP/MEP pathway for isoprenoid precursor biosynthesis. The chain is 4-hydroxy-3-methylbut-2-enyl diphosphate reductase from Gloeothece citriformis (strain PCC 7424) (Cyanothece sp. (strain PCC 7424)).